Reading from the N-terminus, the 757-residue chain is Probable serine/threonine-protein kinase pknA2 (757 aa).

In terms of domain architecture, Protein kinase spans tyrosine 14–serine 274. ATP is bound by residues isoleucine 20–valine 28 and lysine 43. The Proton acceptor role is filled by aspartate 140. Residues aspartate 344–glutamate 387 are disordered. PASTA domains are found at residues aspartate 466 to lysine 539, threonine 545 to lysine 614, and glycine 615 to lysine 681.

This sequence belongs to the protein kinase superfamily. Ser/Thr protein kinase family.

It catalyses the reaction L-seryl-[protein] + ATP = O-phospho-L-seryl-[protein] + ADP + H(+). The catalysed reaction is L-threonyl-[protein] + ATP = O-phospho-L-threonyl-[protein] + ADP + H(+). This Bifidobacterium longum (strain NCC 2705) protein is Probable serine/threonine-protein kinase pknA2 (pknA2).